Consider the following 299-residue polypeptide: Recombination-associated protein RdgC (299 aa).

Belongs to the RdgC family.

The protein resides in the cytoplasm. It localises to the nucleoid. In terms of biological role, may be involved in recombination. In Bordetella parapertussis (strain 12822 / ATCC BAA-587 / NCTC 13253), this protein is Recombination-associated protein RdgC.